Here is a 185-residue protein sequence, read N- to C-terminus: Transcriptional repressor NrdR (185 aa).

The segment at 1 to 24 (MRCPFCGGPDTQVKDSRPSEDSSA) is disordered. A zinc finger spans residues 3–34 (CPFCGGPDTQVKDSRPSEDSSAIRRRRVCPDC). Residues 12 to 24 (QVKDSRPSEDSSA) are compositionally biased toward basic and acidic residues. Residues 49–139 (LVVLKRSGKR…VYKNFREAQD (91 aa)) enclose the ATP-cone domain. Residues 148 to 185 (GERLDGEGDLPEQGDAVPAPPDEAVAAPRRGRPARKRA) are disordered. Residues 176–185 (RRGRPARKRA) show a composition bias toward basic residues.

This sequence belongs to the NrdR family. It depends on Zn(2+) as a cofactor.

Functionally, negatively regulates transcription of bacterial ribonucleotide reductase nrd genes and operons by binding to NrdR-boxes. The sequence is that of Transcriptional repressor NrdR from Methylorubrum extorquens (strain CM4 / NCIMB 13688) (Methylobacterium extorquens).